The following is a 270-amino-acid chain: tRNA pseudouridine synthase A (270 aa).

The active-site Nucleophile is the Asp60. An RNA binding region spans residues 107–111 (FHARF). Tyr118 lines the substrate pocket. Residues 168–172 (QCQSR) are interaction with tRNA.

This sequence belongs to the tRNA pseudouridine synthase TruA family. Homodimer.

The catalysed reaction is uridine(38/39/40) in tRNA = pseudouridine(38/39/40) in tRNA. Formation of pseudouridine at positions 38, 39 and 40 in the anticodon stem and loop of transfer RNAs. The chain is tRNA pseudouridine synthase A from Shigella sonnei (strain Ss046).